The sequence spans 103 residues: Astacin-like peptidase p16 (103 aa).

The Peptidase M12A domain maps to 1–103; that stretch reads NAIPGQHYRW…DAFSRDGSPM (103 aa).

It depends on Zn(2+) as a cofactor.

Functionally, active against casein. Has a role as a digestive enzyme. The chain is Astacin-like peptidase p16 from Argiope aurantia (Black-and-yellow garden spider).